The sequence spans 106 residues: Large ribosomal subunit protein P2A (106 aa).

A Glycyl lysine isopeptide (Lys-Gly) (interchain with G-Cter in ubiquitin) cross-link involves residue Lys-2. Position 16 is a phosphothreonine (Thr-16). Ser-40 and Ser-43 each carry phosphoserine. Lys-48 is covalently cross-linked (Glycyl lysine isopeptide (Lys-Gly) (interchain with G-Cter in ubiquitin)). The residue at position 49 (Ser-49) is a Phosphoserine. Positions 65-82 are enriched in low complexity; it reads PAAGPASAGGAAAASGDA. The tract at residues 65–106 is disordered; sequence PAAGPASAGGAAAASGDAAAEEEKEEEAAEESDDDMGFGLFD. The segment covering 83–100 has biased composition (acidic residues); the sequence is AAEEEKEEEAAEESDDDM. At Ser-96 the chain carries Phosphoserine.

Belongs to the eukaryotic ribosomal protein P1/P2 family. As to quaternary structure, component of the large ribosomal subunit (LSU). Mature yeast ribosomes consist of a small (40S) and a large (60S) subunit. The 40S small subunit contains 1 molecule of ribosomal RNA (18S rRNA) and 33 different proteins (encoded by 57 genes). The large 60S subunit contains 3 rRNA molecules (25S, 5.8S and 5S rRNA) and 46 different proteins (encoded by 81 genes). The 5 acidic ribosomal P-proteins form the stalk structure of the 60S subunit. They are organized as a pentameric complex in which uL10/P0 interacts with 2 heterodimers, P1A-P2B and P1B-P2A. Phosphorylation is not involved in the interaction of the acidic P proteins with the ribosome, however it is suggested to affect the ribosome activity and to participate in a possible ribosome regulatory mechanism. In terms of processing, the N-terminus is not modified.

It localises to the cytoplasm. In terms of biological role, component of the ribosome, a large ribonucleoprotein complex responsible for the synthesis of proteins in the cell. The small ribosomal subunit (SSU) binds messenger RNAs (mRNAs) and translates the encoded message by selecting cognate aminoacyl-transfer RNA (tRNA) molecules. The large subunit (LSU) contains the ribosomal catalytic site termed the peptidyl transferase center (PTC), which catalyzes the formation of peptide bonds, thereby polymerizing the amino acids delivered by tRNAs into a polypeptide chain. The nascent polypeptides leave the ribosome through a tunnel in the LSU and interact with protein factors that function in enzymatic processing, targeting, and the membrane insertion of nascent chains at the exit of the ribosomal tunnel. This chain is Large ribosomal subunit protein P2A, found in Saccharomyces cerevisiae (strain ATCC 204508 / S288c) (Baker's yeast).